The following is a 560-amino-acid chain: Dihydroxy-acid dehydratase (560 aa).

A disordered region spans residues 1–20 (MGDNLKKRSSMTTDGDNRAP). Residue Cys-52 coordinates [2Fe-2S] cluster. Position 84 (Asp-84) interacts with Mg(2+). Cys-125 is a [2Fe-2S] cluster binding site. Positions 126 and 127 each coordinate Mg(2+). At Lys-127 the chain carries N6-carboxylysine. [2Fe-2S] cluster is bound at residue Cys-197. Glu-448 lines the Mg(2+) pocket. Ser-474 (proton acceptor) is an active-site residue.

Belongs to the IlvD/Edd family. Homodimer. [2Fe-2S] cluster serves as cofactor. Mg(2+) is required as a cofactor.

The catalysed reaction is (2R)-2,3-dihydroxy-3-methylbutanoate = 3-methyl-2-oxobutanoate + H2O. It carries out the reaction (2R,3R)-2,3-dihydroxy-3-methylpentanoate = (S)-3-methyl-2-oxopentanoate + H2O. It functions in the pathway amino-acid biosynthesis; L-isoleucine biosynthesis; L-isoleucine from 2-oxobutanoate: step 3/4. Its pathway is amino-acid biosynthesis; L-valine biosynthesis; L-valine from pyruvate: step 3/4. In terms of biological role, functions in the biosynthesis of branched-chain amino acids. Catalyzes the dehydration of (2R,3R)-2,3-dihydroxy-3-methylpentanoate (2,3-dihydroxy-3-methylvalerate) into 2-oxo-3-methylpentanoate (2-oxo-3-methylvalerate) and of (2R)-2,3-dihydroxy-3-methylbutanoate (2,3-dihydroxyisovalerate) into 2-oxo-3-methylbutanoate (2-oxoisovalerate), the penultimate precursor to L-isoleucine and L-valine, respectively. The chain is Dihydroxy-acid dehydratase from Leptospira interrogans serogroup Icterohaemorrhagiae serovar Lai (strain 56601).